A 165-amino-acid polypeptide reads, in one-letter code: Ribosome maturation factor RimM (165 aa).

The PRC barrel domain occupies 94–165 (EDEFYIADLT…YVILNYQREA (72 aa)).

The protein belongs to the RimM family. In terms of assembly, binds ribosomal protein uS19.

It is found in the cytoplasm. Its function is as follows. An accessory protein needed during the final step in the assembly of 30S ribosomal subunit, possibly for assembly of the head region. Essential for efficient processing of 16S rRNA. May be needed both before and after RbfA during the maturation of 16S rRNA. It has affinity for free ribosomal 30S subunits but not for 70S ribosomes. The sequence is that of Ribosome maturation factor RimM from Rickettsia rickettsii (strain Iowa).